Consider the following 493-residue polypeptide: Leucine-rich repeat-containing protein 14 (493 aa).

One copy of the LRR 1; degenerate repeat lies at 111–146 (KHTLRVLDMTGLLDDGVEQDPGTMSMWDCTAAVART). The LRR 2; degenerate repeat unit spans residues 194–218 (RLCCRDLRAEDLPMRNTVALLQLLD). One copy of the LRR 3; degenerate repeat lies at 219–246 (AGCLRRVDLRFNNLGLRGLSVIIPHVAR). The stretch at 247-282 (FQHLASLRLHYVHGDSRQPSVDGEDNFRYFLAQMGR) is one LRR 4; degenerate repeat. 5 LRR repeats span residues 283-307 (FTCL…LSTL), 308-339 (QSPL…VHLK), 340-360 (KLDL…QGLL), 364-391 (AATL…VLTR), and 392-416 (CASL…LLRD).

The protein belongs to the PRAME family. LRRC14 subfamily. In terms of assembly, interacts with IKBKB; disrupts IKBKB-IKBKG interaction preventing I-kappa-B-kinase (IKK) core complex formation and leading to a decrease of IKBKB phosphorylation and NF-kappaB activation. Interacts with CHUK.

Its subcellular location is the cytoplasm. Its function is as follows. Negatively regulates Toll-like receptor-mediated NF-kappa-B signaling by disrupting IKK core complex formation through interaction with IKBKB. The chain is Leucine-rich repeat-containing protein 14 from Bos taurus (Bovine).